The primary structure comprises 286 residues: Bifunctional protein FolD (286 aa).

Residues 164 to 166, Ser-193, and Ile-234 each bind NADP(+); that span reads GRS.

This sequence belongs to the tetrahydrofolate dehydrogenase/cyclohydrolase family. As to quaternary structure, homodimer.

The enzyme catalyses (6R)-5,10-methylene-5,6,7,8-tetrahydrofolate + NADP(+) = (6R)-5,10-methenyltetrahydrofolate + NADPH. It catalyses the reaction (6R)-5,10-methenyltetrahydrofolate + H2O = (6R)-10-formyltetrahydrofolate + H(+). The protein operates within one-carbon metabolism; tetrahydrofolate interconversion. Its function is as follows. Catalyzes the oxidation of 5,10-methylenetetrahydrofolate to 5,10-methenyltetrahydrofolate and then the hydrolysis of 5,10-methenyltetrahydrofolate to 10-formyltetrahydrofolate. This is Bifunctional protein FolD from Oleidesulfovibrio alaskensis (strain ATCC BAA-1058 / DSM 17464 / G20) (Desulfovibrio alaskensis).